A 369-amino-acid chain; its full sequence is Protein FAM187B (369 aa).

The signal sequence occupies residues 1 to 17 (MPPMLWLLLNFAAPALG). Residues 18–333 (FYFSISCPSG…PGRADSVLKG (316 aa)) are Extracellular-facing. 3 N-linked (GlcNAc...) asparagine glycosylation sites follow: N45, N68, and N130. The chain crosses the membrane as a helical span at residues 334 to 354 (LKLVLLVGTVLVLLGALLKFI). Residues 355 to 369 (RPSPGKRSKQVLMVK) are Cytoplasmic-facing.

This sequence belongs to the FAM187 family.

The protein resides in the membrane. This is Protein FAM187B (FAM187B) from Macaca fascicularis (Crab-eating macaque).